Here is a 54-residue protein sequence, read N- to C-terminus: ATP synthase protein 8 (54 aa).

A helical membrane pass occupies residues 8-28 (WWIINFFIIWTAILLTLVILV).

This sequence belongs to the ATPase protein 8 family. F-type ATPases have 2 components, CF(1) - the catalytic core - and CF(0) - the membrane proton channel.

It localises to the mitochondrion membrane. Mitochondrial membrane ATP synthase (F(1)F(0) ATP synthase or Complex V) produces ATP from ADP in the presence of a proton gradient across the membrane which is generated by electron transport complexes of the respiratory chain. F-type ATPases consist of two structural domains, F(1) - containing the extramembraneous catalytic core and F(0) - containing the membrane proton channel, linked together by a central stalk and a peripheral stalk. During catalysis, ATP synthesis in the catalytic domain of F(1) is coupled via a rotary mechanism of the central stalk subunits to proton translocation. Part of the complex F(0) domain. Minor subunit located with subunit a in the membrane. The protein is ATP synthase protein 8 (MT-ATP8) of Paracentrotus lividus (Common sea urchin).